We begin with the raw amino-acid sequence, 209 residues long: uncharacterized protein (209 aa).

This is an uncharacterized protein from Klebsiella pneumoniae.